Consider the following 888-residue polypeptide: 3-hydroxy-3-methylglutaryl-coenzyme A reductase (888 aa).

Residues 1 to 9 (MLSRLFRMH) are Cytoplasmic-facing. The helical transmembrane segment at 10-39 (GLFVASHPWEVIVGTVTLTICMMSMNMFTG) threads the bilayer. Over 40-56 (NNKICGWNYECPKLEED) the chain is Lumenal. The helical transmembrane segment at 57-78 (VLSSDIIILTITRCIAILYIYF) threads the bilayer. Positions 61–218 (DIIILTITRC…MTFFPACVSL (158 aa)) constitute an SSD domain. The INSIG-binding motif motif lies at 75-78 (YIYF). Residues 79–89 (QFQNLRQLGSK) are Cytoplasmic-facing. K89 participates in a covalent cross-link: Glycyl lysine isopeptide (Lys-Gly) (interchain with G-Cter in ubiquitin). Residues 90–114 (YILGIAGLFTIFSSFVFSTVVIHFL) traverse the membrane as a helical segment. Over 115–123 (DKELTGLNE) the chain is Lumenal. The helical transmembrane segment at 124–149 (ALPFFLLLVDLSRASALAKFALSSNS) threads the bilayer. Over 150 to 159 (QDEVRENIAR) the chain is Cytoplasmic. Residues 160 to 187 (GMAILGPTFTLDALVECLVIGVGTMSGV) form a helical membrane-spanning segment. The Lumenal segment spans residues 188 to 191 (RQLE). Residues 192–220 (IMCCFGCMSVLANYFVFMTFFPACVSLVL) form a helical membrane-spanning segment. At 221–248 (ELSRESREGRPIWQLSHFARVLEEEENK) the chain is on the cytoplasmic side. K248 participates in a covalent cross-link: Glycyl lysine isopeptide (Lys-Gly) (interchain with G-Cter in ubiquitin). A helical membrane pass occupies residues 249-275 (PNPVTQRVKMIMSLGLVLVHAHSRWIA). Residues 276 to 314 (DPSPQNSTADNSKVSLGLDENVSKRIEPSVSLWQFYLSK) are Lumenal-facing. N281 and N296 each carry an N-linked (GlcNAc...) asparagine glycan. Residues 315 to 339 (MISMDIEQVITLSLALLLAVKYIFF) traverse the membrane as a helical segment. Over 340 to 888 (EQAETESTLS…LQGTCTKKAA (549 aa)) the chain is Cytoplasmic. Residues E559, K691, and D767 each act as charge relay system in the active site. H866 functions as the Proton donor in the catalytic mechanism. A Phosphoserine; by AMPK modification is found at S872.

This sequence belongs to the HMG-CoA reductase family. As to quaternary structure, homotetramer. Homodimer. Interacts (via its SSD) with INSIG1; the interaction, accelerated by sterols, leads to the recruitment of HMGCR to AMFR/gp78 for its ubiquitination by the sterol-mediated ERAD pathway. Interacts with UBIAD1. Post-translationally, undergoes sterol-mediated ubiquitination and ER-associated degradation (ERAD). Accumulation of sterols in the endoplasmic reticulum (ER) membrane, triggers binding of the reductase to the ER membrane protein INSIG1 or INSIG2. The INSIG1 binding leads to the recruitment of the ubiquitin ligase, AMFR/gp78, RNF139 or RNF145, initiating ubiquitination of the reductase. The ubiquitinated reductase is then extracted from the ER membrane and delivered to cytosolic 26S proteosomes by a mechanism probably mediated by the ATPase Valosin-containing protein VCP/p97. The INSIG2-binding leads to the recruitment of the ubiquitin ligase RNF139, initiating ubiquitination of the reductase. Lys-248 is the main site of ubiquitination. Ubiquitination is enhanced by the presence of a geranylgeranylated protein. In terms of processing, N-glycosylated. Deglycosylated by NGLY1 on release from the endoplasmic reticulum (ER) in a sterol-mediated manner. Phosphorylated. Phosphorylation at Ser-872 reduces the catalytic activity.

It is found in the endoplasmic reticulum membrane. Its subcellular location is the peroxisome membrane. The catalysed reaction is (R)-mevalonate + 2 NADP(+) + CoA = (3S)-3-hydroxy-3-methylglutaryl-CoA + 2 NADPH + 2 H(+). It functions in the pathway metabolic intermediate biosynthesis; (R)-mevalonate biosynthesis; (R)-mevalonate from acetyl-CoA: step 3/3. Its activity is regulated as follows. Regulated by a negative feedback mechanism through sterols and non-sterol metabolites derived from mevalonate. Phosphorylation at Ser-872 down-regulates the catalytic activity. Its function is as follows. Catalyzes the conversion of (3S)-hydroxy-3-methylglutaryl-CoA (HMG-CoA) to mevalonic acid, the rate-limiting step in the synthesis of cholesterol and other isoprenoids, thus plays a critical role in cellular cholesterol homeostasis. The chain is 3-hydroxy-3-methylglutaryl-coenzyme A reductase (HMGCR) from Bos taurus (Bovine).